The sequence spans 318 residues: D-alanine--D-alanine ligase (318 aa).

One can recognise an ATP-grasp domain in the interval 117–315; sequence KQVWLSLGLS…FETLVWRVLE (199 aa). 146–201 lines the ATP pocket; the sequence is ARQIGLPIIVKPANEGSSVGVSRVFDQAQLEEAVTLAARYDGALLMEQLIEGDELT. Asp-268, Glu-282, and Asn-284 together coordinate Mg(2+).

Belongs to the D-alanine--D-alanine ligase family. Requires Mg(2+) as cofactor. Mn(2+) serves as cofactor.

The protein resides in the cytoplasm. It catalyses the reaction 2 D-alanine + ATP = D-alanyl-D-alanine + ADP + phosphate + H(+). It functions in the pathway cell wall biogenesis; peptidoglycan biosynthesis. In terms of biological role, cell wall formation. The protein is D-alanine--D-alanine ligase of Xanthomonas axonopodis pv. citri (strain 306).